The chain runs to 316 residues: Protein lifeguard 2 (316 aa).

The disordered stretch occupies residues 1 to 53 (MTQGKLSVANKAPGTEGQQQVHGEKKEAPAVPSAPPSYEEATSGEGMKAGAFP). Helical transmembrane passes span 106–126 (VYTI…LFTF), 138–158 (PGWY…LACC), and 165–185 (FPWN…LTGM). A glycan (N-linked (GlcNAc...) asparagine) is linked at N191. 4 consecutive transmembrane segments (helical) span residues 194-214 (SVLL…VFSF), 225-245 (GVLF…AILL), 250-270 (VPWL…LFLA), and 290-310 (IFGA…FLQL).

The protein belongs to the BI1 family. LFG subfamily. Interacts with FAS/TNFRSF6 and BAX. In terms of tissue distribution, highly expressed in breast carcinoma tissues. Enhanced expression correlates with the grade of the tumor (grade II/grade III) in primary breast tumors (at protein level). Widely expressed. Expressed at high levels in the brain especially in the hippocampus.

It is found in the cell membrane. Its subcellular location is the membrane raft. It localises to the postsynaptic cell membrane. Functionally, antiapoptotic protein which protects cells uniquely from Fas-induced apoptosis. Regulates Fas-mediated apoptosis in neurons by interfering with caspase-8 activation. May play a role in cerebellar development by affecting cerebellar size, internal granular layer (IGL) thickness, and Purkinje cell (PC) development. The polypeptide is Protein lifeguard 2 (FAIM2) (Homo sapiens (Human)).